Here is a 179-residue protein sequence, read N- to C-terminus: Dynein light chain Tctex-type 5 (179 aa).

It belongs to the dynein light chain Tctex-type family. As to quaternary structure, interacts with ZMYND10.

The chain is Dynein light chain Tctex-type 5 (DYNLT5) from Homo sapiens (Human).